The primary structure comprises 796 residues: AUGMIN subunit 5 (796 aa).

A disordered region spans residues 79 to 120 (HGGSSNASIGSSVNPGKEESKSKGRRKDKTVTGESSSYAEDR). Polar residues predominate over residues 80 to 92 (GGSSNASIGSSVN). 2 coiled-coil regions span residues 115–191 (SYAE…EATR) and 462–501 (GKER…LKKK).

This sequence belongs to the HAUS5 family. Part of the augmin complex composed of 8 subunits. The complex acts on microtubules and interacts with gamma-tubulin in spindles and the phragmoplast.

It localises to the cytoplasm. The protein resides in the cytoskeleton. The protein localises to the spindle. Its subcellular location is the phragmoplast. Its function is as follows. Involved in microtubules reorganization during spindle and phragmoplast development. The polypeptide is AUGMIN subunit 5 (Arabidopsis thaliana (Mouse-ear cress)).